A 101-amino-acid polypeptide reads, in one-letter code: Isochorismate pyruvate lyase (101 aa).

One can recognise a Chorismate mutase domain in the interval 4–94 (PEDCTGLADI…WYIAEQIKYW (91 aa)). Substrate contacts are provided by Arg-14, Arg-31, Lys-42, and Gln-90.

Dimer of dimers.

It catalyses the reaction isochorismate = salicylate + pyruvate. The catalysed reaction is chorismate = prephenate. It participates in siderophore biosynthesis; salicylate biosynthesis. With respect to regulation, inhibited by endo-oxabicyclic diacid resembling to the conformation of the transition state. In terms of biological role, involved in the incorporation of salicylate into the siderophore pyochelin. Catalyzes the elimination of the enolpyruvyl side chain from isochorismate to yield salicylate and pyruvate via a rare pericyclic hydrogen transfer mechanism from C2 to C5. PchB also catalyzes the nonphysiological Claisen rearrangement of chorismate to prephenate in which the pyruvylenol tail is transferred from a C3 ether linkage to a C1-C9 linkage. The polypeptide is Isochorismate pyruvate lyase (Pseudomonas aeruginosa (strain ATCC 15692 / DSM 22644 / CIP 104116 / JCM 14847 / LMG 12228 / 1C / PRS 101 / PAO1)).